We begin with the raw amino-acid sequence, 428 residues long: Kynureninase (428 aa).

Pyridoxal 5'-phosphate contacts are provided by residues Thr-104, Thr-105, 132 to 135 (FPSD), Asp-213, His-216, and Tyr-238. An N6-(pyridoxal phosphate)lysine modification is found at Lys-239. Pyridoxal 5'-phosphate contacts are provided by Trp-267 and Thr-295.

This sequence belongs to the kynureninase family. In terms of assembly, homodimer. The cofactor is pyridoxal 5'-phosphate.

The enzyme catalyses L-kynurenine + H2O = anthranilate + L-alanine + H(+). The catalysed reaction is 3-hydroxy-L-kynurenine + H2O = 3-hydroxyanthranilate + L-alanine + H(+). It functions in the pathway amino-acid degradation; L-kynurenine degradation; L-alanine and anthranilate from L-kynurenine: step 1/1. It participates in cofactor biosynthesis; NAD(+) biosynthesis; quinolinate from L-kynurenine: step 2/3. Its function is as follows. Catalyzes the cleavage of L-kynurenine (L-Kyn) and L-3-hydroxykynurenine (L-3OHKyn) into anthranilic acid (AA) and 3-hydroxyanthranilic acid (3-OHAA), respectively. The sequence is that of Kynureninase from Geobacillus thermodenitrificans (strain NG80-2).